Here is a 130-residue protein sequence, read N- to C-terminus: Large ribosomal subunit protein bL12 (130 aa).

The protein belongs to the bacterial ribosomal protein bL12 family. Homodimer. Part of the ribosomal stalk of the 50S ribosomal subunit. Forms a multimeric L10(L12)X complex, where L10 forms an elongated spine to which 2 to 4 L12 dimers bind in a sequential fashion. Binds GTP-bound translation factors.

Forms part of the ribosomal stalk which helps the ribosome interact with GTP-bound translation factors. Is thus essential for accurate translation. This is Large ribosomal subunit protein bL12 from Chlamydia muridarum (strain MoPn / Nigg).